Reading from the N-terminus, the 473-residue chain is MTFPMWFAVPPEVPSAWLSTGMGPGPLLAAARAWHALAAQYTEIATELASVLAAVQASSWQGPSADRFVVAHQPFRYWLTHAATVATAAAAAHETAAAGYTSALGGMPTLAELAANHAMHGALVTTNFFGVNTIPIALNEADYLRMWIQAATVMSHYQAVAHESVAATPSTPPAPQIVTSAASSAASSSFPDPTKLILQLLKDFLELLRYLAVELLPGPLGDLIAQVLDWFISFVSGPVFTFLAYLVLDPLIYFGPFAPLTSPVLLPAGLTGLAGLGAVSGPAGPMVERVHSDGPSRQSWPAATGVTLVGTNPAALVTTPAPAPTTSAAPTAPSTPGSSAAQGLYAVGGPDGEGFNPIAKTTALAGVTTDAAAPAAKLPGDQAQSSASKATRLRRRLRQHRFEFLADDGRLTMPNTPEMADVAAGNRGLDALGFAGTIPKSAPGSATGLTHLGGGFADVLSQPMLPHTWDGSD.

The short motif at 203-206 (DFLE) is the Iron-binding motif element. A run of 2 helical transmembrane segments spans residues 227 to 247 (VLDW…AYLV) and 250 to 270 (PLIY…PAGL).

Belongs to the mycobacterial PPE family.

The protein resides in the cell membrane. Functionally, essential for efficient heme-iron acquisition (HIA). Binds iron. Strains with a functional PPE37 can utilize low concentrations of hemin very efficiently in broth and on agar plates. During infection, might interfere with the pro-inflammatory cytokine response in infected macrophages. In terms of biological role, in vitro, incubation of the protein in the presence of M.tuberculosis proteases leads to the cleavage of PPE37 into two segments, the N- and C-terminal segments. Transfection of human monocytic THP-1 cell lines with the N-terminal segment leads to the proliferation and differentiation of THP-1 cells into adherent stellate cells with dendritic cell-like morphology. Transfection of THP-1 cells with the C-terminal segment leads to the apoptosis of the cells. Recombinant protein antigens display strong B-cell response in tuberculosis patients and immunized mice. This chain is PPE family protein PPE37, found in Mycobacterium tuberculosis (strain ATCC 25618 / H37Rv).